The chain runs to 1470 residues: MSPHDDAINGTGDMTDRRPLLAAQEGIWTGQQLDPDSPAYNTAEYVHIDGPVDSAVFDTALHHVVAETKALNVAFVVDEQGQPWETDAPAGDWHLHTADLTAEPDPHAAALAWMDRDMARPVDLARRPVFGHALLRIAPEQYLWYHRVHHIALDGFGLSLVARRVAEVYTALTVGEPVADSGFGTLASVRDEERVYRESARFAKDRDYWADRFADRPPVATPAGRTALPARTFHRRVVDLGAVQTETLRAVARDLEVTWSEVLLAVTAARLHHATGASEIVLSLPVMGRLGSVSLRVPCMVRNILPLRVTVTASDSLRELAARISRELRSGLPHQRYRYEQLRRDLRLVGGQRRLSGPGVNIMPFEYDLRFAGHPSTVHNVSAGPVDDLSVNVYDRAEGAGLRIAVDANPDLYDEADVTALQEGLLSLLGQAVAAPDRALGELRTREAVPVLDGGPLPGPVRPVLGLIADHAAQRGGSVAVEHDGRSITYAQLFGSARDLARRLAARQVGRGDVVAVAVPRGIDAITAILGVLLSGAAYCPLDPTAPRARKAELLDDARPALVLTASAHAADFGDRAVVRLDQPEPESQEAARPTAPAPTAPAPEDLAYVIHTSGSTGRPKGVEIGHRALAHFVAGATHRYGLHHGDRVVQFAALHFDTSVEEVFLTLCAGATLVVRTDDMTDSVPGFLDACARLRISFLDLPTAYWHELAYAISTGAAALPAEVRTVVIGGEAALPERVDRWRKAVGTSVRLLNTYGPTEATVVATVADLHDPSLAPGDVPIGLPLPGTRAAVVDGELHLLGDNLAVGYRGDRPPDAARFAPLDAVHEAPRAYRTGDLVRIGDDGQLRYLGRSDTEFKISGHRVHPAEVESALLAHPGVRDAAVVGQLLHDGTRRLVAHVVPDGPAPAVALIRDHLRAALPAAMVPSAVEFLDRLPRTSAGKIDRNALAAMAPDVHVPDPDAQVPDPGAETAAHDSTLERTIAAVWQQVLAVAAVSARDDVFDLGAQSLQVIQVANRLSVELRRDVKVAWLFQHPTPAELARFLKQQEQQAHAQVQPRPAGPGLPPTLLADAVLDPDIRPGGGHPRAAGTPDRVLLTGATGFVGVHLLAELLTSTDAEVVCTVRAPSPAAAAARIHQTLEIHQIHLSDVARKRITAVPADLARPRLGLDEALFAELTRTCGAIVHNGATVSIMREYATLRAANTESTRDLLRMAAVRSTPLHFVSTLSVAPPIGLAPEVPEAFLPPHTGLRYGYQQSKWAAERLLEQAAERGLPVTVHRLGRIVGPHATGYVNERDFLWSVLRAGVPAGIVPDLFEEETWTPVDHIAQALVHLSLGQRPPTATVFNHATTPVRLSDVYDWLEEYGYPLRRMPLAQWRAELRGSSGAFGAVATTLAFFDSWDADTDEATGPELRLGRVRADNVVTGLHGSGITCPSVDRDLVFRYLDHCVTTGTLPAPAGKQGHPAMPAK.

Positions 584–603 (PEPESQEAARPTAPAPTAPA) are disordered. One can recognise a Carrier domain in the interval 974–1049 (AHDSTLERTI…ELARFLKQQE (76 aa)). Ser-1009 bears the O-(pantetheine 4'-phosphoryl)serine mark. The span at 1049-1059 (EQQAHAQVQPR) shows a compositional bias: low complexity. A disordered region spans residues 1049–1070 (EQQAHAQVQPRPAGPGLPPTLL).

This sequence belongs to the ATP-dependent AMP-binding enzyme family. The cofactor is pantetheine 4'-phosphate.

The enzyme catalyses 2 a (3R)-3-isocyanyl-fatty acyl-[ACP] + L-lysine + ATP + 2 NADPH = an isonitrile lipopeptide + 2 holo-[ACP] + AMP + diphosphate + 2 NADP(+). It carries out the reaction 2 (3R)-3-isocyanylbutanoyl-[ACP] + L-lysine + ATP + 2 NADPH = (2S)-2,6-bis[(3R)-3-isocyanobutanamido]hexan-1-ol + 2 holo-[ACP] + AMP + diphosphate + 2 NADP(+). Functionally, nonribosomal peptide synthetase (NRPS) involved in the biosynthesis of a unique class of isonitrile lipopeptides (INLPs). Catalyzes the final step in the pathway, i.e. the condensation of a (3R)-3-isocyanyl-fatty acyl-[ACP] to both amino groups of a lysine, producing isonitrile lipopeptides. Can use (3R)-3-isocyanylbutanoyl-[ACP] as substrate, leading to (2S)-2,6-bis[(3R)-3-isocyanobutanamido]hexan-1-ol. In Streptomyces coeruleorubidus, this protein is Isonitrile lipopeptide synthase.